Here is a 358-residue protein sequence, read N- to C-terminus: Golgi-resident adenosine 3',5'-bisphosphate 3'-phosphatase (358 aa).

N-acetylmethionine is present on Met-1. Topologically, residues 1-12 are cytoplasmic; sequence MAPMGIRLSPLG. Residues 13 to 33 traverse the membrane as a helical segment; it reads VAVFCLLGLGVLYHLYSGFLA. Residues 34–358 lie on the Lumenal side of the membrane; that stretch reads GRFSLFGLGG…KLPDLEKMGH (325 aa). Residues 85–106 are disordered; that stretch reads RESNVLHEKSKGKTREGADDKM. Residue Asp-110 is the Proton acceptor of the active site. Residues Glu-133, Asp-174, Leu-176, and Asp-177 each contribute to the Mg(2+) site. The active-site Proton acceptor is Thr-179. The AMP site is built by Ser-242 and His-245. N-linked (GlcNAc...) asparagine glycosylation is present at Asn-259. Gly-268 and Lys-272 together coordinate AMP. Position 300 (Asp-300) interacts with Mg(2+).

The protein belongs to the inositol monophosphatase superfamily. Requires Mg(2+) as cofactor. Contains N-linked glycan resistant to endoglycosydase H.

Its subcellular location is the golgi apparatus. The protein localises to the trans-Golgi network membrane. It carries out the reaction adenosine 3',5'-bisphosphate + H2O = AMP + phosphate. The protein operates within sulfur metabolism. Strongly inhibited by lithium. Functionally, exhibits 3'-nucleotidase activity toward adenosine 3',5'-bisphosphate (PAP), namely hydrolyzes adenosine 3',5'-bisphosphate into adenosine 5'-monophosphate (AMP) and a phosphate. May play a role in the formation of skeletal elements derived through endochondral ossification, possibly by clearing adenosine 3',5'-bisphosphate produced by Golgi sulfotransferases during glycosaminoglycan sulfation. Has no activity toward 3'-phosphoadenosine 5'-phosphosulfate (PAPS) or inositol phosphate (IP) substrates including I(1)P, I(1,4)P2, I(1,3,4)P3, I(1,4,5)P3 and I(1,3,4,5)P4. This is Golgi-resident adenosine 3',5'-bisphosphate 3'-phosphatase (BPNT2) from Callithrix jacchus (White-tufted-ear marmoset).